A 146-amino-acid polypeptide reads, in one-letter code: Snake venom vascular endothelial growth factor toxin (146 aa).

A signal peptide spans 1-24 (MAVYLLAVAILFCIQGWPLGTVQG). The residue at position 25 (glutamine 25) is a Pyrrolidone carboxylic acid. 3 disulfide bridges follow: cysteine 38–cysteine 80, cysteine 69–cysteine 115, and cysteine 73–cysteine 117. The interval 118–146 (RPRSASGVNSRKHKRNPEEGEPRAKFPFV) is disordered. A compositionally biased stretch (basic and acidic residues) spans 133 to 146 (NPEEGEPRAKFPFV).

Belongs to the PDGF/VEGF growth factor family. Snake venom VEGF subfamily. Homodimer; disulfide-linked. Interacts with VEGF receptor-1 (FLT1) with a high affinity, whereas it binds to VEGF receptor-2 (KDR) with a low affinity. Does not bind VEGF receptor-3 (FLT4). In terms of tissue distribution, expressed by the venom gland.

It localises to the secreted. Functionally, snake venom VEGFs that may contribute to venom dispersion and prey subjugation by inducing vascular permeability and hypotension. This protein induces an increase in capillary permeability after intradermal injection, as well as a drastic hypotensive effect after intravenous injection. The hypotension is mediated by nitric oxide (NO), which is produced by VEGF-activated endothelium NO synthase. Also induces angiogenesis in vitro. Like other crotalid VEGFs, this protein interacts with VEGF receptor-1 (FLT1) with a high affinity, whereas it binds to VEGF receptor-2 (KDR) with a low affinity. This Bothrops jararaca (Jararaca) protein is Snake venom vascular endothelial growth factor toxin.